A 944-amino-acid polypeptide reads, in one-letter code: MAKPRVHEIAAEIGVDSKTALAKLKEMGEFVKGPSSSIEPPVARKLKAALEAAGLTGQAAAPAAAPSSAPRPGARSSAPKPGGRPTPGPQPTAAPEVEAPEASDVPVPAKPLTVAERQAQAEASRKAAAEEKAQAEKSAASATPDAPAAETPSAPRPDAGSAPAPSNGIPRPGIPRPAAPRPGNNPFASNQGMGTKPRPGNNPFASNQGMGQRPAAGAAGPRPAAPRPGSPRPGAPRPGGVGQGARPAGFGQRPAGAGRPGGAPGGAGRPGAPAAGGFQRPAGGFAGRPGGGGRGRGPGGGTAGAFGRGGGKSKSRKSKRTKRAEFELREAPSLGGVSVPRGDGNTIVRLRRGASISDFADKIDASPGNLVTVLFHLGEMATATESLDEATFEVLGTELGYKIQVVSPEDEDRELLEGFDIDLDQELEDEDDDVLEIRPPVVTVMGHVDHGKTRLLDAIRNANVIEGEAGGITQHIGAYQVWAPHEGYERAITFIDTPGHEAFTAMRARGAQVTDIAILVVAADDGIMPQTVEALNHAQAANVPIVVAVNKVDKEGANPAKVRQQLTEYGLVAEEYGGDVMFVDVSALTGKGVEDLLEAVLLTADAGLDLRSNPNKDARGVAIEARLDKGRGAVATVLIQSGTLRVGDAIVAGTAYGRVRAMMDENGDAVHEAYPSRPVQVQGLSSVPGAGDTFLVTEEDRTARQIAEKREAVERNAQLAKARKRISLEDFTRALEEGKVESLNLIIKGDVSGAVEALEESLMKIEVDDSVQLRIIHRGVGAVTESDVNLATIDNAIIIGFNVRPDPKARARAAREGVDIRFYSVIYSALEEIESSLTGMLKPEFEEVQSGVAEIREVFRSSKFGNIAGVIVRSGTITRNAKARVIRDGVVVGDSLAIESLRRFKDDVSEVRTDFEAGIGLGKFNDIQIGDEIETIEMKEKPRV.

Residues 55-81 (LTGQAAAPAAAPSSAPRPGARSSAPKP) show a composition bias toward low complexity. Positions 55-329 (LTGQAAAPAA…RTKRAEFELR (275 aa)) are disordered. Residues 82–92 (GGRPTPGPQPT) show a composition bias toward pro residues. Low complexity predominate over residues 93–107 (AAPEVEAPEASDVPV). The segment covering 123 to 135 (ASRKAAAEEKAQA) has biased composition (basic and acidic residues). 2 stretches are compositionally biased toward low complexity: residues 136 to 153 (EKSA…ETPS) and 211 to 222 (GQRPAAGAAGPR). Pro residues predominate over residues 223-236 (PAAPRPGSPRPGAP). Residues 244–257 (GARPAGFGQRPAGA) are compositionally biased toward low complexity. Positions 258–269 (GRPGGAPGGAGR) are enriched in gly residues. Positions 270–283 (PGAPAAGGFQRPAG) are enriched in low complexity. The segment covering 284–310 (GFAGRPGGGGRGRGPGGGTAGAFGRGG) has biased composition (gly residues). Residues 311–322 (GKSKSRKSKRTK) are compositionally biased toward basic residues. Positions 437–611 (IRPPVVTVMG…LTADAGLDLR (175 aa)) constitute a tr-type G domain. The interval 446–453 (GHVDHGKT) is G1. Residue 446-453 (GHVDHGKT) coordinates GTP. The G2 stretch occupies residues 471-475 (GITQH). A G3 region spans residues 496 to 499 (DTPG). Residues 496–500 (DTPGH) and 550–553 (NKVD) each bind GTP. A G4 region spans residues 550-553 (NKVD). Residues 586 to 588 (SAL) form a G5 region.

Belongs to the TRAFAC class translation factor GTPase superfamily. Classic translation factor GTPase family. IF-2 subfamily.

It localises to the cytoplasm. Its function is as follows. One of the essential components for the initiation of protein synthesis. Protects formylmethionyl-tRNA from spontaneous hydrolysis and promotes its binding to the 30S ribosomal subunits. Also involved in the hydrolysis of GTP during the formation of the 70S ribosomal complex. This chain is Translation initiation factor IF-2, found in Clavibacter michiganensis subsp. michiganensis (strain NCPPB 382).